The sequence spans 1322 residues: Phosphoribosylformylglycinamidine synthase (1322 aa).

ATP-binding positions include 307–318 (GASTGSGGEIRD) and Ala-678. 3 residues coordinate Mg(2+): Glu-718, Asn-722, and Asp-886. One can recognise a Glutamine amidotransferase type-1 domain in the interval 1069 to 1322 (MAILREQGVN…MFRNARVNLG (254 aa)). The Nucleophile role is filled by Cys-1162. Catalysis depends on residues His-1287 and Glu-1289.

The protein in the N-terminal section; belongs to the FGAMS family. Monomer.

The protein resides in the cytoplasm. The catalysed reaction is N(2)-formyl-N(1)-(5-phospho-beta-D-ribosyl)glycinamide + L-glutamine + ATP + H2O = 2-formamido-N(1)-(5-O-phospho-beta-D-ribosyl)acetamidine + L-glutamate + ADP + phosphate + H(+). Its pathway is purine metabolism; IMP biosynthesis via de novo pathway; 5-amino-1-(5-phospho-D-ribosyl)imidazole from N(2)-formyl-N(1)-(5-phospho-D-ribosyl)glycinamide: step 1/2. Functionally, phosphoribosylformylglycinamidine synthase involved in the purines biosynthetic pathway. Catalyzes the ATP-dependent conversion of formylglycinamide ribonucleotide (FGAR) and glutamine to yield formylglycinamidine ribonucleotide (FGAM) and glutamate. The polypeptide is Phosphoribosylformylglycinamidine synthase (Photobacterium profundum (strain SS9)).